A 177-amino-acid polypeptide reads, in one-letter code: Large ribosomal subunit protein uL6 (177 aa).

Lys44 is modified (N6-acetyllysine).

Belongs to the universal ribosomal protein uL6 family. Part of the 50S ribosomal subunit.

This protein binds to the 23S rRNA, and is important in its secondary structure. It is located near the subunit interface in the base of the L7/L12 stalk, and near the tRNA binding site of the peptidyltransferase center. The sequence is that of Large ribosomal subunit protein uL6 from Shigella sonnei (strain Ss046).